The following is a 396-amino-acid chain: Alanine racemase (396 aa).

The active-site Proton acceptor; specific for D-alanine is K46. N6-(pyridoxal phosphate)lysine is present on K46. R145 contributes to the substrate binding site. Y280 (proton acceptor; specific for L-alanine) is an active-site residue. M328 contacts substrate.

The protein belongs to the alanine racemase family. The cofactor is pyridoxal 5'-phosphate.

It catalyses the reaction L-alanine = D-alanine. It functions in the pathway amino-acid biosynthesis; D-alanine biosynthesis; D-alanine from L-alanine: step 1/1. Catalyzes the interconversion of L-alanine and D-alanine. May also act on other amino acids. The chain is Alanine racemase (alr) from Brucella ovis (strain ATCC 25840 / 63/290 / NCTC 10512).